The primary structure comprises 804 residues: Exo-1,4-beta-xylosidase xlnD (804 aa).

The signal sequence occupies residues 1 to 26 (MAHSMSRPVAATAAALLALALPQALA). N29, N124, N148, N242, and N251 each carry an N-linked (GlcNAc...) asparagine glycan. The active site involves D315. 9 N-linked (GlcNAc...) asparagine glycosylation sites follow: N357, N390, N413, N444, N455, N573, N665, N696, and N718.

The protein belongs to the glycosyl hydrolase 3 family.

The protein resides in the secreted. The catalysed reaction is Hydrolysis of (1-&gt;4)-beta-D-xylans, to remove successive D-xylose residues from the non-reducing termini.. It functions in the pathway glycan degradation; xylan degradation. Xylan 1,4-beta-xylosidase involved in the hydrolysis of xylan, a major structural heterogeneous polysaccharide found in plant biomass representing the second most abundant polysaccharide in the biosphere, after cellulose. The sequence is that of Exo-1,4-beta-xylosidase xlnD (xlnD) from Aspergillus awamori (Black koji mold).